A 700-amino-acid chain; its full sequence is Elongation factor G (700 aa).

Positions 8-290 constitute a tr-type G domain; it reads ERYRNIGISA…AVIDYLPAPT (283 aa). Residues 17–24, 88–92, and 142–145 contribute to the GTP site; these read AHIDAGKT, DTPGH, and NKMD.

Belongs to the TRAFAC class translation factor GTPase superfamily. Classic translation factor GTPase family. EF-G/EF-2 subfamily.

The protein resides in the cytoplasm. Catalyzes the GTP-dependent ribosomal translocation step during translation elongation. During this step, the ribosome changes from the pre-translocational (PRE) to the post-translocational (POST) state as the newly formed A-site-bound peptidyl-tRNA and P-site-bound deacylated tRNA move to the P and E sites, respectively. Catalyzes the coordinated movement of the two tRNA molecules, the mRNA and conformational changes in the ribosome. The sequence is that of Elongation factor G (fusA) from Pasteurella multocida (strain Pm70).